Here is a 560-residue protein sequence, read N- to C-terminus: Thermosome subunit 1 (560 aa).

The interval 525–550 (LSGGQTGSDDDDGGAPGGMGGGMGGM) is disordered. Positions 538 to 550 (GAPGGMGGGMGGM) are enriched in gly residues.

The protein belongs to the TCP-1 chaperonin family. In terms of assembly, the thermosome or CCT complex is a oligomeric complex of two octameric double-ring structures; the complex is probably a heterooligomer of CCT1, CCT2 and CCT3 with yet unknown stoichiometry.

Molecular chaperone that assists in the folding or refolding of nascent or denatured proteins along with ATP hydrolysis. ATPase activity is highest in thermosome assemblies containing CCT1:CCT2, followed by assemblies containing CCT1:CCT2:CCT3. Required for thermosome ATPase activity. Not required for growth. The sequence is that of Thermosome subunit 1 (cct1) from Haloferax volcanii (strain ATCC 29605 / DSM 3757 / JCM 8879 / NBRC 14742 / NCIMB 2012 / VKM B-1768 / DS2) (Halobacterium volcanii).